The primary structure comprises 498 residues: ATP synthase subunit beta, chloroplastic (498 aa).

An ATP-binding site is contributed by 172 to 179; sequence GGAGVGKT.

The protein belongs to the ATPase alpha/beta chains family. In terms of assembly, F-type ATPases have 2 components, CF(1) - the catalytic core - and CF(0) - the membrane proton channel. CF(1) has five subunits: alpha(3), beta(3), gamma(1), delta(1), epsilon(1). CF(0) has four main subunits: a(1), b(1), b'(1) and c(9-12).

It is found in the plastid. The protein resides in the chloroplast thylakoid membrane. It carries out the reaction ATP + H2O + 4 H(+)(in) = ADP + phosphate + 5 H(+)(out). Its function is as follows. Produces ATP from ADP in the presence of a proton gradient across the membrane. The catalytic sites are hosted primarily by the beta subunits. The chain is ATP synthase subunit beta, chloroplastic from Phormium tenax (New Zealand flax).